A 282-amino-acid polypeptide reads, in one-letter code: Bifunctional protein FolD (282 aa).

Residues 166 to 168 (GAS) and Ile232 each bind NADP(+).

This sequence belongs to the tetrahydrofolate dehydrogenase/cyclohydrolase family. Homodimer.

The enzyme catalyses (6R)-5,10-methylene-5,6,7,8-tetrahydrofolate + NADP(+) = (6R)-5,10-methenyltetrahydrofolate + NADPH. It carries out the reaction (6R)-5,10-methenyltetrahydrofolate + H2O = (6R)-10-formyltetrahydrofolate + H(+). The protein operates within one-carbon metabolism; tetrahydrofolate interconversion. Catalyzes the oxidation of 5,10-methylenetetrahydrofolate to 5,10-methenyltetrahydrofolate and then the hydrolysis of 5,10-methenyltetrahydrofolate to 10-formyltetrahydrofolate. The chain is Bifunctional protein FolD from Haemophilus influenzae (strain PittGG).